We begin with the raw amino-acid sequence, 107 residues long: MNQIWLKVCAASDMQPGTIRRVNRVGAAPLAVYRVGDQFYATEDTCTHGIASLSEGTLDGDVIECPFHGGAFNVCTGMPASSPCTVPLGVFEVEVKEGEVYVAGEKK.

One can recognise a Rieske domain in the interval 6–102 (LKVCAASDMQ…VEVKEGEVYV (97 aa)). [2Fe-2S] cluster-binding residues include Cys46, His48, Cys65, and His68.

Monomer. Carbazole 1,9a-dioxygenase complex consists of a terminal oxygenase component CarAa, a ferredoxin reductase component CarAd and a ferredoxin component CarAc. [2Fe-2S] cluster is required as a cofactor.

Part of the multicomponent carbazole 1,9a-dioxygenase (CARDO), that converts carbazole (CAR) into 2-aminobiphenyl-2,3-diol. Acts as a mediator in the electron transfer from CarAd to CarAa. In Metapseudomonas resinovorans (Pseudomonas resinovorans), this protein is Ferredoxin CarAc (carAc).